The following is a 156-amino-acid chain: Large ribosomal subunit protein uL15 (156 aa).

Residues 1 to 13 (MKLNEIKDNEGAT) are compositionally biased toward basic and acidic residues. A disordered region spans residues 1–41 (MKLNEIKDNEGATKNRKRLGRGIGSGSGKTAGRGVKGQKAR). Positions 21–35 (RGIGSGSGKTAGRGV) are enriched in gly residues.

This sequence belongs to the universal ribosomal protein uL15 family. Part of the 50S ribosomal subunit.

In terms of biological role, binds to the 23S rRNA. This is Large ribosomal subunit protein uL15 from Sinorhizobium medicae (strain WSM419) (Ensifer medicae).